A 649-amino-acid polypeptide reads, in one-letter code: Drebrin (649 aa).

Residue alanine 2 is modified to N-acetylalanine. An ADF-H domain is found at 3 to 134 (GVSFSGHRLE…DAGAIGQRLS (132 aa)). Phosphoserine is present on residues serine 141 and serine 142. 2 stretches are compositionally biased toward basic and acidic residues: residues 208–236 (QERMEQERQEQEERERRYREREQQIEEHR) and 288–298 (DNPREFFKQQE). Disordered regions lie at residues 208–420 (QERM…PAED), 477–502 (DLWPGNGEGASTLQGEPRAPTPPSGT), and 538–620 (EPPA…PPPV). A phosphothreonine mark is found at threonine 331 and threonine 335. Positions 334–348 (PTRSPSDSSTASTPV) are enriched in polar residues. 3 positions are modified to phosphoserine: serine 337, serine 339, and serine 345. Phosphothreonine is present on threonine 346. Residues 363-374 (QPPPLPPPPPPA) are compositionally biased toward pro residues. Serine 416 is modified (phosphoserine). Threonine 497 carries the phosphothreonine modification. A compositionally biased stretch (polar residues) spans 582–594 (NGETTQKEGTQAS). At serine 601 the chain carries Phosphoserine.

Interacts with RUFY3. Interacts with CXCR4; this interaction is enhanced by antigenic stimulation. Interacts (via ADF-H domain) with ZMYND8 (via N-terminus); the interaction leads to sequestering of ZMYND8 in the cytoplasm. As to expression, expressed in the brain, with expression in the molecular layer of the dentate gyrus, stratum pyramidale, and stratum radiatum of the hippocampus (at protein level). Also expressed in the terminal varicosities distributed along dendritic trees of pyramidal cells in CA4 and CA3 of the hippocampus (at protein level). Expressed in pyramidal cells in CA2, CA1 and the subiculum of the hippocampus (at protein level). Expressed in peripheral blood lymphocytes, including T-cells (at protein level). Expressed in the brain. Expressed in the heart, placenta, lung, skeletal muscle, kidney, pancreas, skin fibroblasts, gingival fibroblasts and bone-derived cells.

Its subcellular location is the cytoplasm. The protein localises to the cell projection. The protein resides in the dendrite. It is found in the cell cortex. It localises to the cell junction. Its subcellular location is the growth cone. Its function is as follows. Actin cytoskeleton-organizing protein that plays a role in the formation of cell projections. Required for actin polymerization at immunological synapses (IS) and for the recruitment of the chemokine receptor CXCR4 to IS. Plays a role in dendritic spine morphogenesis and organization, including the localization of the dopamine receptor DRD1 to the dendritic spines. Involved in memory-related synaptic plasticity in the hippocampus. The chain is Drebrin (DBN1) from Homo sapiens (Human).